The primary structure comprises 506 residues: MAEYIVAIDQGTTSTRAIIFDKSGSIVSTGQLEHEQIFPKPGWVEHNPVEIWNNTREVIGQALSKADLTRHDIAAVGITNQRETAVVWDKNTGEPVYNAIVWQDTRTQPIVDRLAAEGGVERFKPIVGLPLATYFSGTKIVWILENVEGVRERAERGDLLFGTTESWVLWNLTGGTDGGVHATDVTNASRTLFMDLETLSWRDDILDVFGVPKSMLPEIKSSSEVYGAVESSSLLREVPVAGILGDQQAATFGQAAFDPGESKNTYGTGNFLIFNTGEEIVHSKNGLLTTLGYKLGDGKPHYALEGSIAVTGSLVQWLRDNLGVISSAPEIEELAQTVEDNGGAYFVPALSGLFAPYWRADARGALVGLTRYVNKGHIARAALEATAFQTREVLDAVNADSGVDLTELKVDGGMIANNTLMQFQADILGVPVVRPVVAETTALGAAYAAGLATGFWENLDDLRKNWKEDRRWEPKMDAAERDRQLRLWKKAVTKTFDWVDDDVRNG.

Residue Thr12 coordinates ADP. Positions 12, 13, and 14 each coordinate ATP. Thr12 contributes to the sn-glycerol 3-phosphate binding site. Arg16 lines the ADP pocket. Sn-glycerol 3-phosphate contacts are provided by Arg82, Glu83, Tyr134, and Asp246. Arg82, Glu83, Tyr134, Asp246, and Gln247 together coordinate glycerol. 2 residues coordinate ADP: Thr268 and Gly312. 4 residues coordinate ATP: Thr268, Gly312, Gln316, and Gly413. 2 residues coordinate ADP: Gly413 and Asn417.

Belongs to the FGGY kinase family.

It carries out the reaction glycerol + ATP = sn-glycerol 3-phosphate + ADP + H(+). It participates in polyol metabolism; glycerol degradation via glycerol kinase pathway; sn-glycerol 3-phosphate from glycerol: step 1/1. With respect to regulation, inhibited by fructose 1,6-bisphosphate (FBP). Its function is as follows. Key enzyme in the regulation of glycerol uptake and metabolism. Catalyzes the phosphorylation of glycerol to yield sn-glycerol 3-phosphate. This is Glycerol kinase from Leifsonia xyli subsp. xyli (strain CTCB07).